Here is a 141-residue protein sequence, read N- to C-terminus: ATP synthase epsilon chain (141 aa).

It belongs to the ATPase epsilon chain family. In terms of assembly, F-type ATPases have 2 components, CF(1) - the catalytic core - and CF(0) - the membrane proton channel. CF(1) has five subunits: alpha(3), beta(3), gamma(1), delta(1), epsilon(1). CF(0) has three main subunits: a, b and c.

Its subcellular location is the cell inner membrane. Functionally, produces ATP from ADP in the presence of a proton gradient across the membrane. The sequence is that of ATP synthase epsilon chain from Pseudomonas syringae pv. syringae (strain B728a).